The following is a 512-amino-acid chain: Sporulation-regulated protein 3 (512 aa).

The disordered stretch occupies residues 31–68 (RQSSQGQYAVDSHPPKSPELKHRRQRSSSFVNGKCRNR). The Septin-type G domain occupies 106-365 (NGIDFTLMVA…EKCRSEMLRT (260 aa)). Residues 116–123 (GQSGLGKT) form a G1 motif region. GTP-binding positions include 116 to 123 (GQSGLGKT), Gly-168, 247 to 255 (KSDLLTKEE), and Arg-315. A G3 motif region spans residues 165 to 168 (DTPG). The tract at residues 246–249 (AKSD) is G4 motif. 2 coiled-coil regions span residues 376–406 (TKSV…LKNY) and 451–496 (RDWK…KSSN).

It belongs to the TRAFAC class TrmE-Era-EngA-EngB-Septin-like GTPase superfamily. Septin GTPase family. In terms of assembly, interacts with other septin proteins such as SPR28 to form a ring at the bud neck.

Its subcellular location is the prospore membrane. It localises to the bud neck. In terms of biological role, septins are GTPases involved in cytokinesis that assemble into filaments and form a ring at the cleavage site. May act by recruiting MYO1 and HOF1, a protein involved in septation, to the site of cleavage. Septins are also involved in cell morphogenesis, bud site selection, chitin deposition, cell cycle regulation, cell compartmentalization and spore wall formation. The polypeptide is Sporulation-regulated protein 3 (SPR3) (Saccharomyces cerevisiae (strain ATCC 204508 / S288c) (Baker's yeast)).